The chain runs to 784 residues: uncharacterized protein (784 aa).

One can recognise a 3'-5' exonuclease domain in the interval 422–619 (IRIVQNEQDL…EVFQKIVEVV (198 aa)).

This is an uncharacterized protein from Caenorhabditis elegans.